Reading from the N-terminus, the 335-residue chain is Glucose-dependent insulinotropic receptor (335 aa).

Residues 1–12 (MESSFSFGVILA) are Extracellular-facing. A helical membrane pass occupies residues 13-33 (VLASLIIATNTLVAVAVLLLI). Topologically, residues 34 to 37 (HKND) are cytoplasmic. A helical transmembrane segment spans residues 38 to 58 (GVSLCFTLNLAVADTLIGVAI). Topologically, residues 59–81 (SGLLTDQLSSPSRPTQKTLCSLR) are extracellular. The helical transmembrane segment at 82-102 (MAFVTSSAAASVLTVMLITFD) threads the bilayer. The Cytoplasmic segment spans residues 103–125 (RYLAIKQPFRYLKIMSGFVAGAC). Residues 126-146 (IAGLWLVSYLIGFLPLGIPMF) traverse the membrane as a helical segment. Residues 147 to 164 (QQTAYKGQCSFFAVFHPH) are Extracellular-facing. A helical membrane pass occupies residues 165–185 (FVLTLSCVGFFPAMLLFVFFY). At 186–226 (CDMLKIASMHSQQIRKMEHAGAMAGGYRSPRTPSDFKALRT) the chain is on the cytoplasmic side. A helical membrane pass occupies residues 227-247 (VSVLIGSFALSWTPFLITGIV). The Extracellular segment spans residues 248 to 262 (QVACQECHLYLVLER). Residues 263–283 (YLWLLGVGNSLLNPLIYAYWQ) traverse the membrane as a helical segment. The Cytoplasmic segment spans residues 284-335 (KEVRLQLYHMALGVKKVLTSFLLFLSARNCGPERPRESSCHIVTISSSEFDG).

The protein belongs to the G-protein coupled receptor 1 family. Predominantly expressed in the pancreas, especially in the islets.

Its subcellular location is the cell membrane. In terms of biological role, receptor for the endogenous fatty-acid ethanolamide oleoylethanolamide (OEA) and lysophosphatidylcholine (LPC). Functions as a glucose-dependent insulinotropic receptor. The activity of this receptor is mediated by G proteins which activate adenylate cyclase. Seems to act through a G(s) mediated pathway. This chain is Glucose-dependent insulinotropic receptor (GPR119), found in Homo sapiens (Human).